We begin with the raw amino-acid sequence, 223 residues long: Octanoyltransferase (223 aa).

In terms of domain architecture, BPL/LPL catalytic spans 30–214; it reads DLDRDCFLLT…IVADLFGEFT (185 aa). Substrate contacts are provided by residues 75 to 82, 144 to 146, and 157 to 159; these read RGGEITYH, SIG, and GFA. Residue cysteine 175 is the Acyl-thioester intermediate of the active site.

Belongs to the LipB family.

It localises to the cytoplasm. The catalysed reaction is octanoyl-[ACP] + L-lysyl-[protein] = N(6)-octanoyl-L-lysyl-[protein] + holo-[ACP] + H(+). The protein operates within protein modification; protein lipoylation via endogenous pathway; protein N(6)-(lipoyl)lysine from octanoyl-[acyl-carrier-protein]: step 1/2. Its function is as follows. Catalyzes the transfer of endogenously produced octanoic acid from octanoyl-acyl-carrier-protein onto the lipoyl domains of lipoate-dependent enzymes. Lipoyl-ACP can also act as a substrate although octanoyl-ACP is likely to be the physiological substrate. This is Octanoyltransferase from Desulfotalea psychrophila (strain LSv54 / DSM 12343).